Reading from the N-terminus, the 256-residue chain is uncharacterized protein (256 aa).

An N-terminal signal peptide occupies residues 1–24; that stretch reads MIKRVNKLVLGISFLFLIISIFAG. C25 carries the N-palmitoyl cysteine lipid modification. C25 is lipidated: S-diacylglycerol cysteine.

Belongs to the staphylococcal tandem lipoprotein family.

The protein resides in the cell membrane. This is an uncharacterized protein from Staphylococcus aureus (strain Mu50 / ATCC 700699).